The primary structure comprises 53 residues: Small ribosomal subunit protein uS14 (53 aa).

The Zn(2+) site is built by Cys-17, Cys-20, Cys-36, and Cys-39.

Belongs to the universal ribosomal protein uS14 family. Zinc-binding uS14 subfamily. Part of the 30S ribosomal subunit. Zn(2+) is required as a cofactor.

Functionally, binds 16S rRNA, required for the assembly of 30S particles. In Methanococcus maripaludis (strain DSM 14266 / JCM 13030 / NBRC 101832 / S2 / LL), this protein is Small ribosomal subunit protein uS14.